Here is a 274-residue protein sequence, read N- to C-terminus: Penicillin-insensitive murein endopeptidase (274 aa).

The signal sequence occupies residues 1 to 19 (MNKTAIALLALLASSASLA). Intrachain disulfides connect Cys44-Cys265, Cys187-Cys235, and Cys216-Cys223. Residues His110, His113, Asp120, Asp147, His150, and His211 each contribute to the Zn(2+) site. Residues 227–274 (PLPPPGDGCGAELQSWFEPPKPGTTKPEKKTPPPLPPSCQALLDEHVI) are disordered.

It belongs to the peptidase M74 family. Dimer. The cofactor is Zn(2+).

It is found in the periplasm. Murein endopeptidase that cleaves the D-alanyl-meso-2,6-diamino-pimelyl amide bond that connects peptidoglycan strands. Likely plays a role in the removal of murein from the sacculus. The chain is Penicillin-insensitive murein endopeptidase from Escherichia coli O6:K15:H31 (strain 536 / UPEC).